A 216-amino-acid polypeptide reads, in one-letter code: Uracil phosphoribosyltransferase (216 aa).

Residues Arg85, Arg110, and 135–143 contribute to the 5-phospho-alpha-D-ribose 1-diphosphate site; that span reads DPMVATGYS. Uracil-binding positions include Ile200 and 205–207; that span reads GDA. 5-phospho-alpha-D-ribose 1-diphosphate is bound at residue Asp206.

Belongs to the UPRTase family. Requires Mg(2+) as cofactor.

The catalysed reaction is UMP + diphosphate = 5-phospho-alpha-D-ribose 1-diphosphate + uracil. It participates in pyrimidine metabolism; UMP biosynthesis via salvage pathway; UMP from uracil: step 1/1. With respect to regulation, allosterically activated by GTP. Its function is as follows. Catalyzes the conversion of uracil and 5-phospho-alpha-D-ribose 1-diphosphate (PRPP) to UMP and diphosphate. In Ralstonia pickettii (strain 12J), this protein is Uracil phosphoribosyltransferase.